A 361-amino-acid polypeptide reads, in one-letter code: Large ribosomal subunit protein mL45 (361 aa).

The protein belongs to the mitochondrion-specific ribosomal protein mL45 family.

It localises to the mitochondrion. The chain is Large ribosomal subunit protein mL45 (mrpl-45) from Caenorhabditis briggsae.